A 188-amino-acid polypeptide reads, in one-letter code: MEIKLFGKWDSETVAVKDPSLKSYISVAPVLVPHTAGRNSKKSFDKSKMNIVERLANKLMANQNNTGKKHETLAIVEEALTIIENRTKENPVQVLVDALENSGPREETTRISYGGIAFLQSVDVSPSRRLDTAFRNIALGASESAHKNKKTVAQCLADELIFASKADMQKSFAVKKKEEKERVAQSAR.

The protein belongs to the universal ribosomal protein uS7 family. As to quaternary structure, part of the 30S ribosomal subunit.

In terms of biological role, one of the primary rRNA binding proteins, it binds directly to 16S rRNA where it nucleates assembly of the head domain of the 30S subunit. Is located at the subunit interface close to the decoding center. This Methanococcus maripaludis (strain DSM 14266 / JCM 13030 / NBRC 101832 / S2 / LL) protein is Small ribosomal subunit protein uS7.